The chain runs to 588 residues: Adenine deaminase (588 aa).

It belongs to the metallo-dependent hydrolases superfamily. Adenine deaminase family. As to quaternary structure, homodimer. Mn(2+) is required as a cofactor.

The catalysed reaction is adenine + H2O + H(+) = hypoxanthine + NH4(+). The chain is Adenine deaminase from Shigella flexneri serotype 5b (strain 8401).